The sequence spans 59 residues: Putative antitoxin AF_1090 (59 aa).

This sequence belongs to the UPF0165 family.

Functionally, possibly the antitoxin component of a type II toxin-antitoxin (TA) system. The protein is Putative antitoxin AF_1090 of Archaeoglobus fulgidus (strain ATCC 49558 / DSM 4304 / JCM 9628 / NBRC 100126 / VC-16).